We begin with the raw amino-acid sequence, 1336 residues long: DNA-directed RNA polymerase subunit beta' (1336 aa).

4 residues coordinate Zn(2+): Cys-60, Cys-62, Cys-75, and Cys-78. Mg(2+) is bound by residues Asp-535, Asp-537, and Asp-539. Positions 902, 984, 991, and 994 each coordinate Zn(2+).

The protein belongs to the RNA polymerase beta' chain family. In terms of assembly, the RNAP catalytic core consists of 2 alpha, 1 beta, 1 beta' and 1 omega subunit. When a sigma factor is associated with the core the holoenzyme is formed, which can initiate transcription. Mg(2+) is required as a cofactor. Zn(2+) serves as cofactor.

It carries out the reaction RNA(n) + a ribonucleoside 5'-triphosphate = RNA(n+1) + diphosphate. In terms of biological role, DNA-dependent RNA polymerase catalyzes the transcription of DNA into RNA using the four ribonucleoside triphosphates as substrates. The chain is DNA-directed RNA polymerase subunit beta' from Corynebacterium diphtheriae (strain ATCC 700971 / NCTC 13129 / Biotype gravis).